A 449-amino-acid chain; its full sequence is Packaging protein 1 (449 aa).

Residues 1 to 10 are compositionally biased toward basic residues; that stretch reads MESRGKHRLK. The disordered stretch occupies residues 1–64; the sequence is MESRGKHRLK…SSNSILHCPP (64 aa). The segment covering 11 to 25 has biased composition (basic and acidic residues); sequence KNGESKENLGEHEQA. Positions 35 to 59 are enriched in polar residues; that stretch reads SADSLSSPVAEPNFSSPGGRSSNSI. Residue 168-175 participates in ATP binding; that stretch reads GPTGSGKS. The interval 437–449 is DNA-binding; the sequence is TAYSKKCDKLANK.

This sequence belongs to the adenoviridae packaging protein 1 family. In terms of assembly, homodimer. Part of a genome packaging complex composed of packaging proteins 1, 2 and 3; this complex specifically binds to the packaging sequence on the left end of viral genomic DNA and performs packaging of the viral genome. Interacts with protein 33K.

Its subcellular location is the virion. It localises to the host nucleus. It is found in the host nucleoplasm. The protein resides in the host nucleolus. In terms of biological role, component of the packaging machinery which encapsidates the viral DNA into preformed capsids and transcriptional activator of the viral major late promoter (MLP). Binds, along with packaging proteins 2 and 3, to the specific packaging sequence on the left end of viral genomic DNA and displays ATPase activity thereby providing the power stroke of the packaging machinery. The activity of packaging protein IVa2 is stimulated by protein 33K which acts as a terminase. May be the protein that pumps DNA into the capsid powered by ATP hydrolysis. Specifically binds to the 5'-CG-3' nucleotides of the repeats making up the packaging sequence. Component of the DEF-A and DEF-B transcription factors that bind downstream elements of the major late promoter (MLP), and stimulate transcription from the MLP after initiation of viral DNA replication. DEF-A is a heterodimer packaging proteins 1 and 2 and DEF-B is a homodimer of packaging protein 1. The sequence is that of Packaging protein 1 from Mus musculus (Mouse).